Here is a 380-residue protein sequence, read N- to C-terminus: 1-deoxy-D-xylulose 5-phosphate reductoisomerase (380 aa).

The NADPH site is built by S10, G11, S12, I13, G36, K37, N38, and N120. K121 serves as a coordination point for 1-deoxy-D-xylulose 5-phosphate. NADPH is bound at residue E122. D146 serves as a coordination point for Mn(2+). 1-deoxy-D-xylulose 5-phosphate is bound by residues S147, E148, S172, and H195. E148 lines the Mn(2+) pocket. G201 contacts NADPH. 1-deoxy-D-xylulose 5-phosphate-binding residues include S208, N213, K214, and E217. Position 217 (E217) interacts with Mn(2+).

Belongs to the DXR family. The cofactor is Mg(2+). Mn(2+) is required as a cofactor.

It catalyses the reaction 2-C-methyl-D-erythritol 4-phosphate + NADP(+) = 1-deoxy-D-xylulose 5-phosphate + NADPH + H(+). It participates in isoprenoid biosynthesis; isopentenyl diphosphate biosynthesis via DXP pathway; isopentenyl diphosphate from 1-deoxy-D-xylulose 5-phosphate: step 1/6. In terms of biological role, catalyzes the NADPH-dependent rearrangement and reduction of 1-deoxy-D-xylulose-5-phosphate (DXP) to 2-C-methyl-D-erythritol 4-phosphate (MEP). This Bacillus cereus (strain AH187) protein is 1-deoxy-D-xylulose 5-phosphate reductoisomerase.